The chain runs to 546 residues: Phenylalanine--tRNA ligase beta subunit (546 aa).

The 77-residue stretch at 266-342 folds into the B5 domain; it reads LAPAERVVSV…IAYGIENFDA (77 aa). Residues aspartate 320, aspartate 326, glutamate 329, and aspartate 330 each coordinate Mg(2+).

It belongs to the phenylalanyl-tRNA synthetase beta subunit family. Type 2 subfamily. Tetramer of two alpha and two beta subunits. Mg(2+) is required as a cofactor.

It localises to the cytoplasm. It catalyses the reaction tRNA(Phe) + L-phenylalanine + ATP = L-phenylalanyl-tRNA(Phe) + AMP + diphosphate + H(+). This is Phenylalanine--tRNA ligase beta subunit from Methanoculleus marisnigri (strain ATCC 35101 / DSM 1498 / JR1).